A 97-amino-acid polypeptide reads, in one-letter code: Protein RADIALIS-like 6 (97 aa).

The SANT domain occupies 7 to 59; the sequence is SSISPWTFSQNKMFERALAVYDKDTPDRWHNVAKAVGGKTVEEVKRHYDILVE.

As to expression, expressed in the micropylar endosperm surrounding globular-stage embryos but no expression was detected elsewhere, including floral tissues.

It localises to the nucleus. Its function is as follows. Probable transcription factor. In Arabidopsis thaliana (Mouse-ear cress), this protein is Protein RADIALIS-like 6 (RL6).